A 225-amino-acid chain; its full sequence is Uracil-DNA glycosylase (225 aa).

The Proton acceptor role is filled by aspartate 65.

This sequence belongs to the uracil-DNA glycosylase (UDG) superfamily. UNG family.

It localises to the cytoplasm. The enzyme catalyses Hydrolyzes single-stranded DNA or mismatched double-stranded DNA and polynucleotides, releasing free uracil.. Functionally, excises uracil residues from the DNA which can arise as a result of misincorporation of dUMP residues by DNA polymerase or due to deamination of cytosine. This is Uracil-DNA glycosylase from Anoxybacillus flavithermus (strain DSM 21510 / WK1).